Reading from the N-terminus, the 102-residue chain is Large ribosomal subunit protein bL21 (102 aa).

Over residues 79–91 the composition is skewed to basic residues; that stretch reads RKDSKRKKGHRQP. The tract at residues 79-102 is disordered; the sequence is RKDSKRKKGHRQPYTKLTIDKINA.

Belongs to the bacterial ribosomal protein bL21 family. In terms of assembly, part of the 50S ribosomal subunit. Contacts protein L20.

Its function is as follows. This protein binds to 23S rRNA in the presence of protein L20. This is Large ribosomal subunit protein bL21 from Staphylococcus epidermidis (strain ATCC 35984 / DSM 28319 / BCRC 17069 / CCUG 31568 / BM 3577 / RP62A).